Here is a 270-residue protein sequence, read N- to C-terminus: NFAT activation molecule 1 (270 aa).

The N-terminal stretch at 1-42 (MENQPVRWRALPGLPRPPGLPAAPWLLLGVLLLPGTLRLAGG) is a signal peptide. The Extracellular portion of the chain corresponds to 43–163 (QSVTHTGLPI…YREPPQSPQK (121 aa)). One can recognise an Ig-like V-type domain in the interval 50 to 150 (LPIMASLANT…RGSGTFILVR (101 aa)). Cys65 and Cys114 form a disulfide bridge. Asn107 is a glycosylation site (N-linked (GlcNAc...) asparagine). Residues 164-184 (LLLFGFTGLLSVLSVVGTALL) form a helical membrane-spanning segment. Residues 185 to 270 (LWNKKRMRGP…GELNLVYENL (86 aa)) are Cytoplasmic-facing. The segment at 190-219 (RMRGPGKDPTRKCPDPRSASSPKQHPSESV) is disordered. The span at 194–204 (PGKDPTRKCPD) shows a compositional bias: basic and acidic residues. Positions 207-219 (SASSPKQHPSESV) are enriched in polar residues. Positions 209–237 (SSPKQHPSESVYTALQRRETEVYACIENE) constitute an ITAM domain. Phosphotyrosine is present on residues Tyr220 and Tyr231. The interval 234–262 (IENEDGSSPTAKQSPLSQERPHRFEDDGE) is disordered. Residues 239 to 250 (GSSPTAKQSPLS) show a composition bias toward polar residues.

As to quaternary structure, no direct interaction with the B-cell antigen receptor (BCR). Interacts with SYK; probably involved in BCR signaling. Interacts with ZAP70. Post-translationally, N-glycosylated. As to expression, highly expressed in neutrophils, primary monocytes, mast cells, monocytic cell lines and lymphocytes. Also expressed in spleen B and T-cells, and lung. Expressed at low level in non-immune tissue.

It localises to the cell membrane. May function in immune system as a receptor which activates via the calcineurin/NFAT-signaling pathway the downstream cytokine gene promoters. Activates the transcription of IL-13 and TNF-alpha promoters. May be involved in the regulation of B-cell, but not T-cell, development. Overexpression activates downstream effectors without ligand binding or antibody cross-linking. The polypeptide is NFAT activation molecule 1 (NFAM1) (Homo sapiens (Human)).